Reading from the N-terminus, the 425-residue chain is Serine--tRNA ligase (425 aa).

230–232 (TAE) serves as a coordination point for L-serine. Residue 261 to 263 (RSE) participates in ATP binding. Glu284 lines the L-serine pocket. 348-351 (EISS) contacts ATP. Ser384 lines the L-serine pocket.

It belongs to the class-II aminoacyl-tRNA synthetase family. Type-1 seryl-tRNA synthetase subfamily. Homodimer. The tRNA molecule binds across the dimer.

Its subcellular location is the cytoplasm. It carries out the reaction tRNA(Ser) + L-serine + ATP = L-seryl-tRNA(Ser) + AMP + diphosphate + H(+). It catalyses the reaction tRNA(Sec) + L-serine + ATP = L-seryl-tRNA(Sec) + AMP + diphosphate + H(+). It functions in the pathway aminoacyl-tRNA biosynthesis; selenocysteinyl-tRNA(Sec) biosynthesis; L-seryl-tRNA(Sec) from L-serine and tRNA(Sec): step 1/1. Its function is as follows. Catalyzes the attachment of serine to tRNA(Ser). Is also able to aminoacylate tRNA(Sec) with serine, to form the misacylated tRNA L-seryl-tRNA(Sec), which will be further converted into selenocysteinyl-tRNA(Sec). The polypeptide is Serine--tRNA ligase (Maridesulfovibrio salexigens (strain ATCC 14822 / DSM 2638 / NCIMB 8403 / VKM B-1763) (Desulfovibrio salexigens)).